The chain runs to 285 residues: ATP synthase gamma chain (285 aa).

This sequence belongs to the ATPase gamma chain family. F-type ATPases have 2 components, CF(1) - the catalytic core - and CF(0) - the membrane proton channel. CF(1) has five subunits: alpha(3), beta(3), gamma(1), delta(1), epsilon(1). CF(0) has three main subunits: a, b and c.

It is found in the cell membrane. Its function is as follows. Produces ATP from ADP in the presence of a proton gradient across the membrane. The gamma chain is believed to be important in regulating ATPase activity and the flow of protons through the CF(0) complex. In Geobacillus sp. (strain WCH70), this protein is ATP synthase gamma chain.